We begin with the raw amino-acid sequence, 371 residues long: 4-hydroxy-3-methylbut-2-en-1-yl diphosphate synthase (flavodoxin) (371 aa).

[4Fe-4S] cluster-binding residues include Cys269, Cys272, Cys304, and Glu311.

This sequence belongs to the IspG family. It depends on [4Fe-4S] cluster as a cofactor.

The enzyme catalyses (2E)-4-hydroxy-3-methylbut-2-enyl diphosphate + oxidized [flavodoxin] + H2O + 2 H(+) = 2-C-methyl-D-erythritol 2,4-cyclic diphosphate + reduced [flavodoxin]. The protein operates within isoprenoid biosynthesis; isopentenyl diphosphate biosynthesis via DXP pathway; isopentenyl diphosphate from 1-deoxy-D-xylulose 5-phosphate: step 5/6. In terms of biological role, converts 2C-methyl-D-erythritol 2,4-cyclodiphosphate (ME-2,4cPP) into 1-hydroxy-2-methyl-2-(E)-butenyl 4-diphosphate. This is 4-hydroxy-3-methylbut-2-en-1-yl diphosphate synthase (flavodoxin) from Acinetobacter baumannii (strain AB307-0294).